The primary structure comprises 318 residues: Protein phosphatase 1 regulatory subunit 3C (318 aa).

Residues Arg84–Phe87 carry the PP1-binding motif motif. The interaction with EPM2A stretch occupies residues Pro141–Pro263. Residues Arg149 to Val257 enclose the CBM21 domain.

As to quaternary structure, interacts with PPP1CC catalytic subunit of PP1 and associates with glycogen. Forms complexes with glycogen phosphorylase, glycogen synthase and phosphorylase kinase which is necessary for its regulation of PP1 activity. Also interacts with EPM2A/laforin. In terms of processing, ubiquitinated by NHLRC1/malin in a EPM2A/laforin-dependent manner.

Acts as a glycogen-targeting subunit for PP1 and regulates its activity. Activates glycogen synthase, reduces glycogen phosphorylase activity and limits glycogen breakdown. Dramatically increases basal and insulin-stimulated glycogen synthesis upon overexpression in a variety of cell types. The sequence is that of Protein phosphatase 1 regulatory subunit 3C from Bos taurus (Bovine).